The following is a 299-amino-acid chain: Protease HtpX homolog (299 aa).

2 helical membrane passes run 14-34 (WLLL…VGYL) and 39-59 (GFGG…TMIF). His-143 serves as a coordination point for Zn(2+). Glu-144 is a catalytic residue. His-147 contacts Zn(2+). Helical transmembrane passes span 153 to 173 (IRIS…AVMA) and 198 to 218 (IILL…ATLV). Glu-227 is a Zn(2+) binding site.

It belongs to the peptidase M48B family. Zn(2+) serves as cofactor.

It is found in the cell membrane. This is Protease HtpX homolog from Streptococcus thermophilus (strain ATCC BAA-491 / LMD-9).